The primary structure comprises 330 residues: Diacylglycerol acyltransferase/mycolyltransferase Ag85B (330 aa).

Positions 1 to 40 (MTDLSKKVRAWGRRLLVGTAAAVTLPGLIGLAGGAPTAGA) are cleaved as a signal peptide. Substrate is bound at residue 82-83 (LR). Residues 98–108 (FEWYYQSGLSI) form a fibronectin-binding region. Residues cysteine 127 and cysteine 132 are joined by a disulfide bond. Residues serine 166 and aspartate 194 each coordinate substrate. The active-site Nucleophile is serine 166. Glutamate 270 is a catalytic residue. Substrate-binding positions include 272–275 (FVRS), lysine 279, and 302–304 (HSW). Histidine 302 is an active-site residue.

It belongs to the mycobacterial A85 antigen family.

It is found in the secreted. The catalysed reaction is 2 alpha,alpha'-trehalose 6-mycolate = alpha,alpha'-trehalose 6,6'-bismycolate + alpha,alpha-trehalose. The enzyme catalyses an acyl-CoA + a 1,2-diacyl-sn-glycerol = a triacyl-sn-glycerol + CoA. Its function is as follows. The antigen 85 proteins (FbpA, FbpB, FbpC) are responsible for the high affinity of mycobacteria for fibronectin, a large adhesive glycoprotein, which facilitates the attachment of M.tuberculosis to murine alveolar macrophages (AMs). They also help to maintain the integrity of the cell wall by catalyzing the transfer of mycolic acids to cell wall arabinogalactan and through the synthesis of alpha,alpha-trehalose dimycolate (TDM, cord factor). They catalyze the transfer of a mycoloyl residue from one molecule of alpha,alpha-trehalose monomycolate (TMM) to another TMM, leading to the formation of TDM. The chain is Diacylglycerol acyltransferase/mycolyltransferase Ag85B (fbpB) from Mycobacterium scrofulaceum.